We begin with the raw amino-acid sequence, 556 residues long: Endoglucanase 22 (556 aa).

The first 33 residues, 1–33, serve as a signal peptide directing secretion; sequence MSRGRARLQPPPPGTRTTTLAAVLVLVLLAVVA. The active-site Nucleophile is the Asp-108. Catalysis depends on residues His-450, Asp-502, and Glu-511.

Belongs to the glycosyl hydrolase 9 (cellulase E) family.

The protein resides in the secreted. The enzyme catalyses Endohydrolysis of (1-&gt;4)-beta-D-glucosidic linkages in cellulose, lichenin and cereal beta-D-glucans.. The chain is Endoglucanase 22 (GLU11) from Oryza sativa subsp. japonica (Rice).